Here is a 348-residue protein sequence, read N- to C-terminus: ECA polysaccharide chain length modulation protein (348 aa).

The next 2 membrane-spanning stretches (helical) occupy residues 31–51 and 323–343; these read FWII…TFFA and AFLM…VALT.

This sequence belongs to the WzzB/Cld/Rol family. In terms of assembly, probably part of a complex composed of WzxE, WzyE and WzzE.

The protein resides in the cell inner membrane. It participates in bacterial outer membrane biogenesis; enterobacterial common antigen biosynthesis. Functionally, modulates the polysaccharide chain length of enterobacterial common antigen (ECA). This Salmonella typhimurium (strain LT2 / SGSC1412 / ATCC 700720) protein is ECA polysaccharide chain length modulation protein.